We begin with the raw amino-acid sequence, 962 residues long: Leucine--tRNA ligase (962 aa).

The short motif at 41–51 (PYLNGNLHAGH) is the 'HIGH' region element. The 'KMSKS' region motif lies at 631 to 635 (KMSKS). Residue Lys634 participates in ATP binding.

The protein belongs to the class-I aminoacyl-tRNA synthetase family.

The protein resides in the cytoplasm. It carries out the reaction tRNA(Leu) + L-leucine + ATP = L-leucyl-tRNA(Leu) + AMP + diphosphate. In Methanococcoides burtonii (strain DSM 6242 / NBRC 107633 / OCM 468 / ACE-M), this protein is Leucine--tRNA ligase.